We begin with the raw amino-acid sequence, 290 residues long: Membrane protein insertase YidC (290 aa).

The N-terminal stretch at 1–19 is a signal peptide; sequence MKKKTLLPLFLGIMVFLAG. The N-palmitoyl cysteine moiety is linked to residue Cys20. Cys20 carries S-diacylglycerol cysteine lipidation. 5 helical membrane passes run 56-76, 134-154, 176-196, 207-224, and 229-251; these read YGLA…PFML, MLGC…YFVL, PDIW…YVSS, GYMM…ISLS, and LGLY…NIYY. A disordered region spans residues 270 to 290; sequence HNGGSNKKGKNTQVVSKKKKK.

It belongs to the OXA1/ALB3/YidC family. Type 2 subfamily.

It is found in the cell membrane. Its function is as follows. Required for the insertion and/or proper folding and/or complex formation of integral membrane proteins into the membrane. Involved in integration of membrane proteins that insert both dependently and independently of the Sec translocase complex, as well as at least some lipoproteins. The sequence is that of Membrane protein insertase YidC from Staphylococcus aureus (strain MRSA252).